The sequence spans 251 residues: Ubiquinone/menaquinone biosynthesis C-methyltransferase UbiE (251 aa).

Residues threonine 74, aspartate 95, 123 to 124 (NA), and serine 140 each bind S-adenosyl-L-methionine.

It belongs to the class I-like SAM-binding methyltransferase superfamily. MenG/UbiE family.

It catalyses the reaction a 2-demethylmenaquinol + S-adenosyl-L-methionine = a menaquinol + S-adenosyl-L-homocysteine + H(+). The catalysed reaction is a 2-methoxy-6-(all-trans-polyprenyl)benzene-1,4-diol + S-adenosyl-L-methionine = a 5-methoxy-2-methyl-3-(all-trans-polyprenyl)benzene-1,4-diol + S-adenosyl-L-homocysteine + H(+). It functions in the pathway quinol/quinone metabolism; menaquinone biosynthesis; menaquinol from 1,4-dihydroxy-2-naphthoate: step 2/2. It participates in cofactor biosynthesis; ubiquinone biosynthesis. Methyltransferase required for the conversion of demethylmenaquinol (DMKH2) to menaquinol (MKH2) and the conversion of 2-polyprenyl-6-methoxy-1,4-benzoquinol (DDMQH2) to 2-polyprenyl-3-methyl-6-methoxy-1,4-benzoquinol (DMQH2). The protein is Ubiquinone/menaquinone biosynthesis C-methyltransferase UbiE of Escherichia coli O9:H4 (strain HS).